The primary structure comprises 1339 residues: Astrotactin-2 (1339 aa).

The N-terminal stretch at 1 to 49 (MAAAGARLSPGPGSGLRGRPRLCFHPGPPPLLPLLLLFLLLLPPPPLLA) is a signal peptide. The Lumenal segment spans residues 50–206 (GATAAASREP…IVEEQMHILH (157 aa)). The N-linked (GlcNAc...) asparagine glycan is linked to Asn168. Residues 207 to 227 (ISVMGGLIALLLLLLVFTVAL) traverse the membrane as a helical segment. At 228–434 (YAQRRWQKRR…KGLLKSPVNK (207 aa)) the chain is on the cytoplasmic side. 2 disordered regions span residues 296-316 (EEDE…EFGS) and 363-408 (TPIE…ADDE). Residues 435–455 (TALTLIAVSSCILAMVCGSQM) traverse the membrane as a helical segment. Topologically, residues 456–1339 (SCPLTVKVTL…RNTYGESKGR (884 aa)) are lumenal. EGF-like domains are found at residues 510 to 550 (VRDL…HLCV), 651 to 695 (PVRD…SGCY), and 699 to 751 (KGID…KSCL). Intrachain disulfides connect Cys514-Cys526, Cys522-Cys533, Cys535-Cys549, Cys655-Cys668, Cys662-Cys679, Cys681-Cys694, Cys703-Cys715, Cys711-Cys735, and Cys737-Cys750. N-linked (GlcNAc...) asparagine glycosylation is found at Asn770 and Asn783. Cystine bridges form between Cys825–Cys987, Cys916–Cys977, and Cys983–Cys990. N-linked (GlcNAc...) asparagine glycosylation occurs at Asn1020. Intrachain disulfides connect Cys1036-Cys1047, Cys1049-Cys1062, Cys1136-Cys1158, Cys1190-Cys1277, and Cys1298-Cys1321. The 124-residue stretch at 1065-1188 (LLQPVLRLSP…SELSTVTLRT (124 aa)) folds into the Fibronectin type-III domain.

The protein belongs to the astrotactin family. As to quaternary structure, interacts with ASTN1; the interaction is not calcium-dependent.

Its subcellular location is the membrane. The protein localises to the perikaryon. It localises to the cytoplasm. It is found in the cell cortex. The protein resides in the early endosome. Its subcellular location is the late endosome. The protein localises to the cytoplasmic vesicle. It localises to the clathrin-coated vesicle. Its function is as follows. Mediates recycling of the neuronal cell adhesion molecule ASTN1 to the anterior pole of the cell membrane in migrating neurons. Promotes ASTN1 internalization and intracellular transport of endocytosed ASTN1. Selectively binds inositol-4,5-bisphosphate, inositol-3,4,5-trisphosphate and inositol-1,3,4,5-tetrakisphosphate, suggesting it is recruited to membranes that contain lipids with a phosphoinositide headgroup. This is Astrotactin-2 (ASTN2) from Homo sapiens (Human).